The primary structure comprises 28 residues: Phospholipase A2 (28 aa).

Glycine 28 provides a ligand contact to Ca(2+).

The cofactor is Ca(2+). As to expression, expressed by the venom gland.

It localises to the secreted. The catalysed reaction is a 1,2-diacyl-sn-glycero-3-phosphocholine + H2O = a 1-acyl-sn-glycero-3-phosphocholine + a fatty acid + H(+). Its function is as follows. PLA2 catalyzes the calcium-dependent hydrolysis of the 2-acyl groups in 3-sn-phosphoglycerides. The protein is Phospholipase A2 of Scolopendra dehaani (Thai centipede).